The following is a 488-amino-acid chain: Poly(3-hydroxybutyrate) depolymerase (488 aa).

Residues 1-27 (MVRRLWRRIAGWLAACVAILCAFPLHA) form the signal peptide. S166 functions as the Charge relay system in the catalytic mechanism. The 83-residue stretch at 346 to 428 (APTGLAVTAT…AAVSATTKSA (83 aa)) folds into the Fibronectin type-III domain.

Belongs to the AB hydrolase superfamily. Lipase family.

The protein localises to the secreted. It catalyses the reaction [(3R)-hydroxybutanoate](n) + H2O = [(3R)-hydroxybutanoate](n-2) + (3R)-hydroxybutanoate dimer + H(+). It carries out the reaction [(3R)-hydroxybutanoate](n) + H2O = [(3R)-hydroxybutanoate](n-3) + (3R)-hydroxybutanoate trimer + H(+). The enzyme catalyses [(3R)-hydroxybutanoate](n) + H2O = [(3R)-hydroxybutanoate](n-1) + (R)-3-hydroxybutanoate + H(+). The catalysed reaction is [(3R)-hydroxybutanoate](n) + H2O = [(3R)-hydroxybutanoate](n-5) + (3R)-hydroxybutanoate pentamer + H(+). It catalyses the reaction [(3R)-hydroxybutanoate](n) + H2O = [(3R)-hydroxybutanoate](n-4) + (3R)-hydroxybutanoate tetramer + H(+). Functionally, this protein degrades water-insoluble and water-soluble PHB to monomeric D(-)-3-hydroxybutyrate. The sequence is that of Poly(3-hydroxybutyrate) depolymerase from Ralstonia pickettii (Burkholderia pickettii).